A 289-amino-acid chain; its full sequence is MSEIKEVRNKIKCITNTQKITKAMEMVSISKMKKAEVKMNSGRPYLKTIKEIINNFISNNTRYQHVYLEQRAVKKIGIIIISTDRGLCGNLNVTLFKKILDFIQNYNNRNITSDLSILGLKGLSFFKSLSNKIVYFNDYAKNNYTFSDCLNCNSIFMKLYSIGEIDRLFLAYNKFKSTLIQIPSIIQLLPLSKKKIHCHNNHWDYIYESDSKLLLNKLLNNYLEFQIYQASLENYTSEQAARMIAMKQATDNSKDLIRELQIIYNKARQDNITQELTEIVSGAAAISLN.

It belongs to the ATPase gamma chain family. As to quaternary structure, F-type ATPases have 2 components, CF(1) - the catalytic core - and CF(0) - the membrane proton channel. CF(1) has five subunits: alpha(3), beta(3), gamma(1), delta(1), epsilon(1). CF(0) has three main subunits: a, b and c.

The protein resides in the cell membrane. In terms of biological role, produces ATP from ADP in the presence of a proton gradient across the membrane. The gamma chain is believed to be important in regulating ATPase activity and the flow of protons through the CF(0) complex. In Buchnera aphidicola subsp. Melaphis rhois, this protein is ATP synthase gamma chain.